A 537-amino-acid polypeptide reads, in one-letter code: Methylmalonate-semialdehyde/malonate-semialdehyde dehydrogenase [acylating], mitochondrial (537 aa).

Residues 1-34 (MAAVAVAAAAAALRARILQVSSKVNSSWQPASSF) constitute a mitochondrion transit peptide. K49, K54, K57, and K78 each carry N6-acetyllysine; alternate. N6-succinyllysine; alternate occurs at positions 49, 54, 57, and 78. K89 is modified (N6-acetyllysine). K119 and K131 each carry N6-acetyllysine; alternate. Residues K119 and K131 each carry the N6-succinyllysine; alternate modification. A185, F187, K211, E214, R215, and S264 together coordinate NAD(+). At S264 the chain carries Phosphoserine. K300 carries the post-translational modification N6-acetyllysine. C319 functions as the Nucleophile in the catalytic mechanism. K332 and K333 each carry N6-acetyllysine. N6-acetyllysine; alternate occurs at positions 366 and 378. An N6-succinyllysine; alternate mark is found at K366 and K378. Phosphoserine is present on S382. K393 is modified (N6-succinyllysine). Residue E419 participates in NAD(+) binding. K502 carries the post-translational modification N6-acetyllysine. K519 is subject to N6-succinyllysine.

This sequence belongs to the aldehyde dehydrogenase family. In terms of assembly, homodimer. The N-terminus is blocked.

The protein resides in the mitochondrion. The catalysed reaction is 2-methyl-3-oxopropanoate + NAD(+) + CoA + H2O = propanoyl-CoA + hydrogencarbonate + NADH + H(+). It carries out the reaction 3-oxopropanoate + NAD(+) + CoA + H2O = hydrogencarbonate + acetyl-CoA + NADH + H(+). It catalyses the reaction (R)-2-methyl-3-oxopropanoate + NAD(+) + CoA + H2O = propanoyl-CoA + hydrogencarbonate + NADH + H(+). The enzyme catalyses (S)-2-methyl-3-oxopropanoate + NAD(+) + CoA + H2O = propanoyl-CoA + hydrogencarbonate + NADH + H(+). In terms of biological role, malonate and methylmalonate semialdehyde dehydrogenase involved in the catabolism of valine, thymine, and compounds catabolized by way of beta-alanine, including uracil and cytidine. This is Methylmalonate-semialdehyde/malonate-semialdehyde dehydrogenase [acylating], mitochondrial (ALDH6A1) from Bos taurus (Bovine).